A 339-amino-acid chain; its full sequence is Centrosomal protein of 41 kDa (339 aa).

A disordered region spans residues 56–99; that stretch reads RLEDSDSATSEADTDIAAKTNGKGSPEEQSPSPVQFINSTGAGD. Ser62 and Ser65 each carry phosphoserine. Residues 62 to 73 show a composition bias toward low complexity; sequence SATSEADTDIAA. Thr75 carries the phosphothreonine modification. Ser80 and Ser87 each carry phosphoserine. Over residues 82 to 99 the composition is skewed to polar residues; the sequence is EEQSPSPVQFINSTGAGD. The Rhodanese domain maps to 135 to 232; it reads PDCPFLLLDV…LAQKFPEGLV (98 aa). A disordered region spans residues 283–339; it reads DQGPANNPSRLNQNNSAGRDLKVPAGRGGQNLPTGCPTSHSNSRTLNSGHLQGKPWK. Positions 286 to 299 are enriched in polar residues; that stretch reads PANNPSRLNQNNSA. The residue at position 309 (Arg309) is an Omega-N-methylarginine. Residues 313 to 332 show a composition bias toward polar residues; sequence NLPTGCPTSHSNSRTLNSGH.

It belongs to the CEP41 family. In terms of assembly, found in a complex with TTLL6.

It localises to the cytoplasm. The protein resides in the cytoskeleton. The protein localises to the microtubule organizing center. Its subcellular location is the centrosome. It is found in the cell projection. It localises to the cilium. The protein resides in the cilium basal body. In terms of biological role, required during ciliogenesis for tubulin glutamylation in cilium. Probably acts by participating in the transport of TTLL6, a tubulin polyglutamylase, between the basal body and the cilium. The protein is Centrosomal protein of 41 kDa (Cep41) of Rattus norvegicus (Rat).